The following is an 850-amino-acid chain: Protein translocase subunit SecA (850 aa).

ATP-binding positions include Gln-87, 105 to 109 (GEGKT), and Asp-494. Zn(2+)-binding residues include Cys-834, Cys-836, Cys-845, and Cys-846.

It belongs to the SecA family. Monomer and homodimer. Part of the essential Sec protein translocation apparatus which comprises SecA, SecYEG and auxiliary proteins SecDF-YajC and YidC. The cofactor is Zn(2+).

The protein resides in the cell inner membrane. It is found in the cytoplasm. The catalysed reaction is ATP + H2O + cellular proteinSide 1 = ADP + phosphate + cellular proteinSide 2.. Functionally, part of the Sec protein translocase complex. Interacts with the SecYEG preprotein conducting channel. Has a central role in coupling the hydrolysis of ATP to the transfer of proteins into and across the cell membrane, serving as an ATP-driven molecular motor driving the stepwise translocation of polypeptide chains across the membrane. In Desulfotalea psychrophila (strain LSv54 / DSM 12343), this protein is Protein translocase subunit SecA.